The chain runs to 237 residues: CD99 antigen-like protein 2 (237 aa).

A signal peptide spans 1-25; that stretch reads MVARLTAFLVCLVFSLATLVQRGYG. Residues 26–161 are Extracellular-facing; it reads DTDGFNLEDA…PGSGISTETG (136 aa). The interval 47-157 is disordered; sequence DHFSTTTRRP…SNDDPGSGIS (111 aa). Composition is skewed to low complexity over residues 51–66 and 74–84; these read TTTR…ANPA and TTTTRRPGTTR. A compositionally biased stretch (basic and acidic residues) spans 102–111; sequence DDRNDLDGPK. O-linked (Xyl...) (chondroitin sulfate) serine glycosylation occurs at Ser-154. Residues 162-182 traverse the membrane as a helical segment; sequence TIAGVASALAMALIGAVSSYI. Over 183 to 237 the chain is Cytoplasmic; sequence SYQQKKFCFSIQQGLNADYVKGENLEAVVCEEPQVTYSKQETQSAEPPPPEPPRI. Residues 218 to 227 are compositionally biased toward polar residues; that stretch reads TYSKQETQSA. The disordered stretch occupies residues 218–237; the sequence is TYSKQETQSAEPPPPEPPRI. The segment covering 228–237 has biased composition (pro residues); sequence EPPPPEPPRI.

It belongs to the CD99 family. O-glycosylated. Highly expressed in the nervous system, including brain, dentate nucleus of hippocampus, granular and Purkinje cells of cerebellum, brain stem nucleus and choroid plexus. Expressed in peripheral blood T- and B-cells and neutrophils (at protein level). Almost undetectable in bone marrow-derived neutrophils (at protein level). Also expressed in thymocytes (at protein level) with higher expression in cortical thymocytes than in medullary thymocytes. Expressed at high levels in testis (mostly in germ cells and Sertoli cells) and ovary (mostly in granulosa cells). Expressed in lung, heart, kidney and liver (at protein level); however, expression in heart, kidney and liver seems restricted to endothelial cells (at protein level). Highly expressed in endothelial cells and to a lower level in vascular smooth muscle cells (at protein level). Low expression in spleen.

The protein resides in the cell membrane. The protein localises to the cell junction. It is found in the secreted. Its function is as follows. Plays a role in a late step of leukocyte extravasation helping cells to overcome the endothelial basement membrane. Acts at the same site as, but independently of, PECAM1. Homophilic adhesion molecule, but these interactions may not be required for cell aggregation. The protein is CD99 antigen-like protein 2 (Cd99l2) of Mus musculus (Mouse).